A 766-amino-acid polypeptide reads, in one-letter code: Protein zer-1 homolog (766 aa).

The residue at position 2 (alanine 2) is an N-acetylalanine. LRR repeat units follow at residues 226-245 (SLVL…IVQL), 246-268 (HKLR…KLTR), and 278-302 (LGNL…KMEE). ARM repeat units follow at residues 427 to 467 (RSEQ…NFSI), 511 to 556 (DNDH…NITD), 558 to 600 (TPDN…NVAE), 602 to 643 (KELR…HIMF), and 714 to 756 (PDKY…HCSN).

The protein belongs to the zyg-11 family. In terms of assembly, interacts with the ELOC-ELOB/Elongin BC complex. Part of an E3 ubiquitin ligase complex including ZER1, CUL2 and Elongin BC. As to expression, expressed in testis, spermatocytes and spermatids (at protein level). Expressed in spermatocytes, spermatids, prostate, skeletal muscle, ovary, small intestine, heart, brain and pancreas.

Functionally, serves as substrate adapter subunit in the E3 ubiquitin ligase complex ZYG11B-CUL2-Elongin BC. Acts to target substrates bearing N-terminal degrons for proteasomal degradation with the first four residues of substrates being the key recognition elements. Involved in the clearance of proteolytic fragments generated by caspase cleavage during apoptosis since N-terminal glycine degrons are strongly enriched at caspase cleavage sites. Also important in the quality control of protein N-myristoylation in which N-terminal glycine degrons are conditionally exposed after a failure of N-myristoylation. This chain is Protein zer-1 homolog, found in Homo sapiens (Human).